Here is a 1197-residue protein sequence, read N- to C-terminus: DNA-directed RNA polymerase subunit beta (1197 aa).

It belongs to the RNA polymerase beta chain family. As to quaternary structure, the RNAP catalytic core consists of 2 alpha, 1 beta, 1 beta' and 1 omega subunit. When a sigma factor is associated with the core the holoenzyme is formed, which can initiate transcription.

The catalysed reaction is RNA(n) + a ribonucleoside 5'-triphosphate = RNA(n+1) + diphosphate. DNA-dependent RNA polymerase catalyzes the transcription of DNA into RNA using the four ribonucleoside triphosphates as substrates. The protein is DNA-directed RNA polymerase subunit beta of Streptococcus pyogenes serotype M12 (strain MGAS9429).